A 426-amino-acid polypeptide reads, in one-letter code: mRNA cap guanine-N(7) methyltransferase (426 aa).

In terms of domain architecture, mRNA cap 0 methyltransferase spans 138 to 421; sequence SPIIKLRNFN…FYTTFAFRKV (284 aa). MRNA is bound at residue 147–148; it reads NN. Positions 151, 169, 191, 220, 246, and 251 each coordinate S-adenosyl-L-methionine.

Belongs to the class I-like SAM-binding methyltransferase superfamily. mRNA cap 0 methyltransferase family.

It is found in the nucleus. It catalyses the reaction a 5'-end (5'-triphosphoguanosine)-ribonucleoside in mRNA + S-adenosyl-L-methionine = a 5'-end (N(7)-methyl 5'-triphosphoguanosine)-ribonucleoside in mRNA + S-adenosyl-L-homocysteine. Functionally, responsible for methylating the 5'-cap structure of mRNAs. This Kluyveromyces lactis (strain ATCC 8585 / CBS 2359 / DSM 70799 / NBRC 1267 / NRRL Y-1140 / WM37) (Yeast) protein is mRNA cap guanine-N(7) methyltransferase (ABD1).